The sequence spans 316 residues: MSQCNSSYSVTRENLKYFAQFVYLVPGVLFQLRILIVIWGTHNKIYLKSSFFTIWSLDSLVSLVQMFLDVSFTRIHIYFPQLCEGFSVFLEIHWMIPNIVYPFYLYAFTAKSVIHSFLSINRASCVLMPTKYAYIWRSHMKKVIVFILLYPFLLLWNVIISEKYLDFIFGGFVISYIKRVPWASLSKFQIISYVFTFSVTLVTNSITLSKMAKLKKRLLMAERHLCVATAWISSGFVISLIAQAHFAFFRGDHELVEIFYIIQCVSFDLLNVGSPIVMITLSRELRNHVFLINPSPVVSRSTSTFNNKNNISILIQ.

The next 7 helical transmembrane spans lie at 21 to 41 (FVYL…IWGT), 50 to 70 (SFFT…FLDV), 99 to 121 (IVYP…LSIN), 140 to 160 (MKKV…NVII), 188 to 208 (FQII…SITL), 229 to 249 (TAWI…FAFF), and 258 to 278 (IFYI…PIVM).

It belongs to the nematode receptor-like protein srg family.

It localises to the membrane. This is Serpentine receptor class gamma-4 (srg-4) from Caenorhabditis elegans.